Reading from the N-terminus, the 209-residue chain is Thiamine-phosphate synthase (209 aa).

Residues 35 to 39 (QLRNK) and Asn67 each bind 4-amino-2-methyl-5-(diphosphooxymethyl)pyrimidine. Asp68 and Asp87 together coordinate Mg(2+). Ser106 is a binding site for 4-amino-2-methyl-5-(diphosphooxymethyl)pyrimidine. 2-[(2R,5Z)-2-carboxy-4-methylthiazol-5(2H)-ylidene]ethyl phosphate is bound at residue 132 to 134 (TGS). Lys135 serves as a coordination point for 4-amino-2-methyl-5-(diphosphooxymethyl)pyrimidine. 2-[(2R,5Z)-2-carboxy-4-methylthiazol-5(2H)-ylidene]ethyl phosphate-binding positions include Gly163 and 183-184 (IS).

It belongs to the thiamine-phosphate synthase family. The cofactor is Mg(2+).

It catalyses the reaction 2-[(2R,5Z)-2-carboxy-4-methylthiazol-5(2H)-ylidene]ethyl phosphate + 4-amino-2-methyl-5-(diphosphooxymethyl)pyrimidine + 2 H(+) = thiamine phosphate + CO2 + diphosphate. The enzyme catalyses 2-(2-carboxy-4-methylthiazol-5-yl)ethyl phosphate + 4-amino-2-methyl-5-(diphosphooxymethyl)pyrimidine + 2 H(+) = thiamine phosphate + CO2 + diphosphate. It carries out the reaction 4-methyl-5-(2-phosphooxyethyl)-thiazole + 4-amino-2-methyl-5-(diphosphooxymethyl)pyrimidine + H(+) = thiamine phosphate + diphosphate. The protein operates within cofactor biosynthesis; thiamine diphosphate biosynthesis; thiamine phosphate from 4-amino-2-methyl-5-diphosphomethylpyrimidine and 4-methyl-5-(2-phosphoethyl)-thiazole: step 1/1. Its function is as follows. Condenses 4-methyl-5-(beta-hydroxyethyl)thiazole monophosphate (THZ-P) and 2-methyl-4-amino-5-hydroxymethyl pyrimidine pyrophosphate (HMP-PP) to form thiamine monophosphate (TMP). The polypeptide is Thiamine-phosphate synthase (Chlorobium phaeovibrioides (strain DSM 265 / 1930) (Prosthecochloris vibrioformis (strain DSM 265))).